Reading from the N-terminus, the 342-residue chain is Transcriptional regulator of the unfolded protein response hacA (342 aa).

The disordered stretch occupies residues methionine 1–methionine 105. Composition is skewed to basic and acidic residues over residues proline 35–lysine 48 and lysine 74–leucine 88. Residues glutamate 80 to leucine 143 enclose the bZIP domain. The tract at residues arginine 82–arginine 135 is basic motif. The segment at leucine 136 to leucine 143 is leucine-zipper. 2 disordered regions span residues glutamate 146–leucine 167 and glutamate 306–threonine 330. Residues threonine 315 to threonine 330 show a composition bias toward polar residues.

It belongs to the bZIP family.

It localises to the nucleus. Master transcriptional regulator of the unfolded protein response (UPR) that recognizes and binds to the UPR element (UPRE) in the promoter of UPR-regulated genes. In the canonical UPR pathway, the ireA RNase splices the cytoplasmic mRNA hacA, which alters the reading frame to allow translation of the bZIP transcription factor hacA. Induces the expression of pmrA, scrA and spfA in response to UPR. This is Transcriptional regulator of the unfolded protein response hacA from Aspergillus fumigatus (strain ATCC MYA-4609 / CBS 101355 / FGSC A1100 / Af293) (Neosartorya fumigata).